A 155-amino-acid chain; its full sequence is MKQRVAVRERDRLQEKERLRRQRQRAEREARQQASQAEQEAKLAALERHQETGRLTKEEKRYLNKRTRQGAARARTWDLDEDEADEAAALQSQILDRIGSASGAGRVRKQRRARIREALPKASEDRRYAGLTPGLAPVGMSDEESSDEELSDEED.

Basic and acidic residues-rich tracts occupy residues 1–31, 39–62, and 115–128; these read MKQRVAVRERDRLQEKERLRRQRQRAEREAR, QEAKLAALERHQETGRLTKEEKRY, and IREALPKASEDRRY. Disordered stretches follow at residues 1-74 and 100-155; these read MKQR…AARA and SASG…DEED. The span at 141–155 shows a compositional bias: acidic residues; sequence SDEESSDEELSDEED.

The protein belongs to the RRT14 family.

It localises to the nucleus. The protein resides in the nucleolus. Its function is as follows. Involved in ribosome biogenesis, probably through modulation of rDNA transcription. This chain is Regulator of rDNA transcription 14 (RRT14), found in Eremothecium gossypii (strain ATCC 10895 / CBS 109.51 / FGSC 9923 / NRRL Y-1056) (Yeast).